Here is a 199-residue protein sequence, read N- to C-terminus: MEASPASGPRHLMDPHIFTSNFNNGIGRHKTYLCYEVERLDNGTSVKMDQHRGFLHNQAKNLLCGFYGRHAELRFLDLVPSLQLDPAQIYRVTWFISWSPCFSWGCAGEVRAFLQENTHVRLRIFAARIYDYDPLYKEALQMLRDAGAQVSIMTYDEFKHCWDTFVDHQGCPFQPWDGLDEHSQALSGRLRAILQNQGN.

Residues Gly-27 to Leu-143 form the CMP/dCMP-type deaminase domain. His-70 is a binding site for Zn(2+). Glu-72 functions as the Proton donor in the catalytic mechanism. Positions 101 and 106 each coordinate Zn(2+).

The protein belongs to the cytidine and deoxycytidylate deaminase family. As to quaternary structure, interacts with AGO2. Interacts with TRIB3 (via N-terminus). Zn(2+) is required as a cofactor. Expressed in peripheral leukocytes with higher expression in CD14-positive phagocytic cells. Highly expressed in keratinocytes and in periphery blood monocytes. Also detected in non-lymphoid tissues including lung and adipose tissues. Found at high levels in colorectal adenocarcinoma, Burkitt's lymphoma and chronic myelogenous leukemia.

The protein resides in the nucleus. The protein localises to the cytoplasm. It catalyses the reaction a 2'-deoxycytidine in single-stranded DNA + H2O + H(+) = a 2'-deoxyuridine in single-stranded DNA + NH4(+). Its function is as follows. DNA deaminase (cytidine deaminase) with restriction activity against viruses, foreign DNA and mobility of retrotransposons. Exhibits antiviral activity against adeno-associated virus (AAV) and human T-cell leukemia virus type 1 (HTLV-1) and may inhibit the mobility of LTR and non-LTR retrotransposons. Selectively targets single-stranded DNA and can deaminate both methylcytosine and cytosine in foreign DNA. Can induce somatic hypermutation in the nuclear and mitochondrial DNA. May also play a role in the epigenetic regulation of gene expression through the process of active DNA demethylation. The protein is DNA dC-&gt;dU-editing enzyme APOBEC-3A (APOBEC3A) of Homo sapiens (Human).